Consider the following 85-residue polypeptide: Conotoxin Vx15a (85 aa).

Residues 1–23 form the signal peptide; the sequence is MEKLTVLILVATVLLTIQVLAQS. Residues 24–49 constitute a propeptide that is removed on maturation; sequence DGDKHLMKRSKQYATKRLSALMRGHR. Glutamine 50 bears the Pyrrolidone carboxylic acid mark.

The protein belongs to the conotoxin O2 superfamily. Contains 4 disulfide bonds. In terms of tissue distribution, expressed by the venom duct.

The protein localises to the secreted. The chain is Conotoxin Vx15a from Conus vexillum (Flag cone).